Consider the following 158-residue polypeptide: S-ribosylhomocysteine lyase (158 aa).

The Fe cation site is built by histidine 56, histidine 60, and cysteine 125.

It belongs to the LuxS family. In terms of assembly, homodimer. Fe cation serves as cofactor.

The catalysed reaction is S-(5-deoxy-D-ribos-5-yl)-L-homocysteine = (S)-4,5-dihydroxypentane-2,3-dione + L-homocysteine. Functionally, involved in the synthesis of autoinducer 2 (AI-2) which is secreted by bacteria and is used to communicate both the cell density and the metabolic potential of the environment. The regulation of gene expression in response to changes in cell density is called quorum sensing. Catalyzes the transformation of S-ribosylhomocysteine (RHC) to homocysteine (HC) and 4,5-dihydroxy-2,3-pentadione (DPD). The protein is S-ribosylhomocysteine lyase of Leuconostoc citreum (strain KM20).